A 608-amino-acid polypeptide reads, in one-letter code: RAS guanyl-releasing protein 2 (608 aa).

In terms of domain architecture, N-terminal Ras-GEF spans 4 to 126 (TLDLDKGCTV…SLIDIESVPT (123 aa)). Phosphoserine is present on residues serine 116, serine 117, and serine 147. Positions 154–387 (EPMELAEHLT…YQLSLQREPR (234 aa)) constitute a Ras-GEF domain. Residues 382-405 (LQREPRSKSSPTSPTSCTPPPRPP) are disordered. 2 EF-hand domains span residues 426–461 (HIEK…FPYL) and 463–490 (AFGD…SSSV). Ca(2+)-binding residues include aspartate 439, aspartate 441, aspartate 443, histidine 445, glutamate 450, aspartate 468, asparagine 470, aspartate 472, cysteine 474, and glutamate 479. The Phorbol-ester/DAG-type zinc finger occupies 498-548 (VHNLQESNSLRPVACRHCKALILGIYKQGLKCRACGVNCHKQCKDRLSVEC). Phosphoserine occurs at positions 554 and 575. The tract at residues 555–596 (VSLEGSAPSPSPTHTHHRAFSFSLPRPGRRSSRPPEIREEEV) is disordered.

This sequence belongs to the RASGRP family. As to quaternary structure, forms a signaling complex with RAP1 and BRAF. Interacts with F-actin. Interacts with RAP1. Expressed in striatal neurons (at protein level). Expressed in the hematopoietic system. Detected in olfactory structures and deep cortical layers of brain.

It localises to the cytoplasm. It is found in the cytosol. The protein resides in the cell membrane. The protein localises to the synapse. Its subcellular location is the synaptosome. It localises to the cell projection. It is found in the ruffle membrane. Functions as a calcium- and DAG-regulated nucleotide exchange factor specifically activating Rap through the exchange of bound GDP for GTP. May also activate other GTPases such as RRAS, RRAS2, NRAS, KRAS but not HRAS. Functions in aggregation of platelets and adhesion of T-lymphocytes and neutrophils probably through inside-out integrin activation. May function in the muscarinic acetylcholine receptor M1/CHRM1 signaling pathway. The polypeptide is RAS guanyl-releasing protein 2 (Rasgrp2) (Rattus norvegicus (Rat)).